Reading from the N-terminus, the 497-residue chain is Bifunctional protein GlmU (497 aa).

The interval 1–243 is pyrophosphorylase; sequence MTSSTTSSTD…SALVAGVNDR (243 aa). UDP-N-acetyl-alpha-D-glucosamine is bound by residues 16–19, Lys-30, Gln-87, and 92–93; these read LAAG and GT. Residue Asp-118 coordinates Mg(2+). The UDP-N-acetyl-alpha-D-glucosamine site is built by Gly-153, Glu-168, Asn-183, and Asn-241. Asn-241 is a binding site for Mg(2+). Residues 244–264 are linker; the sequence is VQLAALGAELNRRIVTAHQRA. The interval 265–497 is N-acetyltransferase; it reads GVTVIDPGST…LGHHDDSQGS (233 aa). Residues Arg-346 and Lys-364 each coordinate UDP-N-acetyl-alpha-D-glucosamine. The active-site Proton acceptor is His-376. 2 residues coordinate UDP-N-acetyl-alpha-D-glucosamine: Tyr-379 and Asn-390. Residues Ala-393, 399–400, Ser-418, and Ala-436 contribute to the acetyl-CoA site; that span reads NY. The disordered stretch occupies residues 473-497; that stretch reads ARAAERASGEAAEQALGHHDDSQGS. Over residues 488–497 the composition is skewed to basic and acidic residues; that stretch reads LGHHDDSQGS.

This sequence in the N-terminal section; belongs to the N-acetylglucosamine-1-phosphate uridyltransferase family. In the C-terminal section; belongs to the transferase hexapeptide repeat family. As to quaternary structure, homotrimer. It depends on Mg(2+) as a cofactor.

The protein resides in the cytoplasm. The catalysed reaction is alpha-D-glucosamine 1-phosphate + acetyl-CoA = N-acetyl-alpha-D-glucosamine 1-phosphate + CoA + H(+). It catalyses the reaction N-acetyl-alpha-D-glucosamine 1-phosphate + UTP + H(+) = UDP-N-acetyl-alpha-D-glucosamine + diphosphate. It functions in the pathway nucleotide-sugar biosynthesis; UDP-N-acetyl-alpha-D-glucosamine biosynthesis; N-acetyl-alpha-D-glucosamine 1-phosphate from alpha-D-glucosamine 6-phosphate (route II): step 2/2. The protein operates within nucleotide-sugar biosynthesis; UDP-N-acetyl-alpha-D-glucosamine biosynthesis; UDP-N-acetyl-alpha-D-glucosamine from N-acetyl-alpha-D-glucosamine 1-phosphate: step 1/1. It participates in bacterial outer membrane biogenesis; LPS lipid A biosynthesis. Functionally, catalyzes the last two sequential reactions in the de novo biosynthetic pathway for UDP-N-acetylglucosamine (UDP-GlcNAc). The C-terminal domain catalyzes the transfer of acetyl group from acetyl coenzyme A to glucosamine-1-phosphate (GlcN-1-P) to produce N-acetylglucosamine-1-phosphate (GlcNAc-1-P), which is converted into UDP-GlcNAc by the transfer of uridine 5-monophosphate (from uridine 5-triphosphate), a reaction catalyzed by the N-terminal domain. The protein is Bifunctional protein GlmU of Mycobacterium sp. (strain JLS).